The following is a 474-amino-acid chain: Bifunctional protein HldE (474 aa).

The tract at residues 1–318 (MKLSMPRFDQ…RAIQREEGSE (318 aa)) is ribokinase. 194–197 (NLSE) provides a ligand contact to ATP. Asp-263 is a catalytic residue. The segment at 343-474 (FTNGCFDILH…AIVEKIRGQG (132 aa)) is cytidylyltransferase.

It in the N-terminal section; belongs to the carbohydrate kinase PfkB family. This sequence in the C-terminal section; belongs to the cytidylyltransferase family. As to quaternary structure, homodimer.

It carries out the reaction D-glycero-beta-D-manno-heptose 7-phosphate + ATP = D-glycero-beta-D-manno-heptose 1,7-bisphosphate + ADP + H(+). It catalyses the reaction D-glycero-beta-D-manno-heptose 1-phosphate + ATP + H(+) = ADP-D-glycero-beta-D-manno-heptose + diphosphate. The protein operates within nucleotide-sugar biosynthesis; ADP-L-glycero-beta-D-manno-heptose biosynthesis; ADP-L-glycero-beta-D-manno-heptose from D-glycero-beta-D-manno-heptose 7-phosphate: step 1/4. It functions in the pathway nucleotide-sugar biosynthesis; ADP-L-glycero-beta-D-manno-heptose biosynthesis; ADP-L-glycero-beta-D-manno-heptose from D-glycero-beta-D-manno-heptose 7-phosphate: step 3/4. Functionally, catalyzes the phosphorylation of D-glycero-D-manno-heptose 7-phosphate at the C-1 position to selectively form D-glycero-beta-D-manno-heptose-1,7-bisphosphate. Catalyzes the ADP transfer from ATP to D-glycero-beta-D-manno-heptose 1-phosphate, yielding ADP-D-glycero-beta-D-manno-heptose. The polypeptide is Bifunctional protein HldE (Pseudomonas savastanoi pv. phaseolicola (strain 1448A / Race 6) (Pseudomonas syringae pv. phaseolicola (strain 1448A / Race 6))).